Consider the following 211-residue polypeptide: Protein-L-isoaspartate O-methyltransferase (211 aa).

The active site involves S62.

This sequence belongs to the methyltransferase superfamily. L-isoaspartyl/D-aspartyl protein methyltransferase family.

The protein resides in the cytoplasm. It carries out the reaction [protein]-L-isoaspartate + S-adenosyl-L-methionine = [protein]-L-isoaspartate alpha-methyl ester + S-adenosyl-L-homocysteine. In terms of biological role, catalyzes the methyl esterification of L-isoaspartyl residues in peptides and proteins that result from spontaneous decomposition of normal L-aspartyl and L-asparaginyl residues. It plays a role in the repair and/or degradation of damaged proteins. In Shewanella piezotolerans (strain WP3 / JCM 13877), this protein is Protein-L-isoaspartate O-methyltransferase.